The following is a 75-amino-acid chain: uncharacterized protein (75 aa).

Residues 3–45 form the SpoVT-AbrB domain; it reads TTVFLSNRSQAVRLPKAVALPENVKRVEVIAVGRTRIITPAGE.

This sequence belongs to the VapB family.

This is an uncharacterized protein from Escherichia coli (strain K12).